We begin with the raw amino-acid sequence, 565 residues long: MAQRIFTLILLLCSTSVFAGLFDAPGRSQFVPADQAFAFDFQQNQHDLNLTWQIKDGYYLYRKQIRITPEHAKIADEQLPQGVWHEDEFYGKSEIYRDRLTLPVTINQASAGATLTVTYQGCADAGFCYPPETKTVPLSEVVANNAASQPVSVSQQEQHTAQLPFSALWALLIGIGIAFTPCVLPMYPLISGIVLGGKQRLSTARALLLTFIYVQGMALTYTALGLVVAAAGLQFQAALQHPYVLIGLAIVFTLLAMSMFGLFTLQLPSSLQTRLTLMSNRQQGGSPGGVFVMGAIAGLICSPCTTAPLSAILLYIAQSGNMWLGGGTLYLYALGMGLPLMLITVFGNRLLPKSGPWMEQVKTAFGFVILALPVFLLERVIGDVWGLRLWSALGVAFFGWAFITSLQAKRGWMRVVQIILLAAALVSVRPLQDWAFGATHTAQTQTHLNFTQIKTVDELNHALVEAKGKPVMLDLYADWCVACKEFEKYTFSDPQVQKALADTVLLQANITANDAQDVALLKHLNVLGLPTILFFDGQGQEHPQARVTGFMDAETFSAHLRDRQP.

The N-terminal stretch at M1–A19 is a signal peptide. Disulfide bonds link C122–C128 and C182–C304. Transmembrane regions (helical) follow at residues L163–V183, L208–V228, Y243–F263, I296–I316, W323–I343, W357–L377, and V384–T404. The Thioredoxin domain maps to W434–P565. Residues C480 and C483 are joined by a disulfide bond.

The protein belongs to the thioredoxin family. DsbD subfamily.

Its subcellular location is the cell inner membrane. It carries out the reaction [protein]-dithiol + NAD(+) = [protein]-disulfide + NADH + H(+). The enzyme catalyses [protein]-dithiol + NADP(+) = [protein]-disulfide + NADPH + H(+). Functionally, required to facilitate the formation of correct disulfide bonds in some periplasmic proteins and for the assembly of the periplasmic c-type cytochromes. Acts by transferring electrons from cytoplasmic thioredoxin to the periplasm. This transfer involves a cascade of disulfide bond formation and reduction steps. This Shigella boydii serotype 4 (strain Sb227) protein is Thiol:disulfide interchange protein DsbD.